A 376-amino-acid polypeptide reads, in one-letter code: Endoplasmic reticulum-Golgi intermediate compartment protein 2 (376 aa).

The Cytoplasmic portion of the chain corresponds to M1–G33. A helical membrane pass occupies residues G34–V54. At Y55–C318 the chain is on the lumenal side. A helical transmembrane segment spans residues G319 to V339. Residues D340 to Q376 lie on the Cytoplasmic side of the membrane.

It belongs to the ERGIC family.

The protein localises to the endoplasmic reticulum-Golgi intermediate compartment membrane. Its subcellular location is the golgi apparatus. The protein resides in the cis-Golgi network membrane. It is found in the endoplasmic reticulum membrane. Functionally, possible role in transport between endoplasmic reticulum and Golgi. The polypeptide is Endoplasmic reticulum-Golgi intermediate compartment protein 2 (ergic2) (Danio rerio (Zebrafish)).